A 329-amino-acid polypeptide reads, in one-letter code: 4-hydroxythreonine-4-phosphate dehydrogenase (329 aa).

The substrate site is built by H136 and T137. Residues H166, H211, and H266 each contribute to the a divalent metal cation site. Substrate-binding residues include K274, N283, and R292.

The protein belongs to the PdxA family. Homodimer. It depends on Zn(2+) as a cofactor. The cofactor is Mg(2+). Co(2+) is required as a cofactor.

It localises to the cytoplasm. The enzyme catalyses 4-(phosphooxy)-L-threonine + NAD(+) = 3-amino-2-oxopropyl phosphate + CO2 + NADH. The protein operates within cofactor biosynthesis; pyridoxine 5'-phosphate biosynthesis; pyridoxine 5'-phosphate from D-erythrose 4-phosphate: step 4/5. Its function is as follows. Catalyzes the NAD(P)-dependent oxidation of 4-(phosphooxy)-L-threonine (HTP) into 2-amino-3-oxo-4-(phosphooxy)butyric acid which spontaneously decarboxylates to form 3-amino-2-oxopropyl phosphate (AHAP). The chain is 4-hydroxythreonine-4-phosphate dehydrogenase from Escherichia coli (strain K12 / MC4100 / BW2952).